We begin with the raw amino-acid sequence, 91 residues long: Bacterial microcompartment shell protein PduJ (91 aa).

A BMC domain is found at 4–88 (ALGLVETKGL…PHSDVEAILP (85 aa)).

Belongs to the bacterial microcompartments protein family. As to quaternary structure, homohexamer with a central pore. Interacts with PduP, which targets PduP to the BMC. Interacts with shell protein PduA.

The protein localises to the bacterial microcompartment. Its pathway is polyol metabolism; 1,2-propanediol degradation. In terms of biological role, one of the major shell proteins of the bacterial microcompartment (BMC) dedicated to 1,2-propanediol (1,2-PD) degradation. At least one of PduA or PduJ is required for BMC assembly; it must be encoded as the first gene in the pdu operon. Required for structural integrity of BMCs and to mitigate propionaldehyde toxicity, probably joins facets responsible for BMC closure. Probably the hub for binding multiple enzymes to the interior of the BMC. Its function is as follows. Expression of a cosmid containing the full 21-gene pdu operon in E.coli allows E.coli to grow on 1,2-PD with the appearance of BMCs in its cytoplasm. Overexpression of this protein leads to an internal structure with a whorled architecture. Functionally, the 1,2-PD-specific bacterial microcompartment (BMC) concentrates low levels of 1,2-PD catabolic enzymes, concentrates volatile reaction intermediates thus enhancing pathway flux and keeps the level of toxic, mutagenic propionaldehyde low. The sequence is that of Bacterial microcompartment shell protein PduJ from Citrobacter freundii.